The sequence spans 329 residues: GIPYWTYNNGDEPLVAISLLDTSNIANQLDSTPRVFYLGGNPEVEFPETQEEQQERHQQKHSLPVGRRGGQHQQEEDGNSVLSGFSSEFLAQTFNTEEDTAKRLRSPRDKRNQIVRVEGGLRIINPEGQQEEEEEEEEEKQRSEQGRNGLEETICSLKIRENIAQPARADLYNPRAGSISTANSLTLPILRYLRLSAEYVRLYRNGIYAPHWNINANSLLYVIRGEGRVRIVNSQGNAVFDNKVRKGQLVVVPQNFVVAEQAGEEEGLEYLVFKTNDRAAVSHVQQVFRATPADVLANAFGLRQRQVTELKLSGNRGPLVHPQSQSQSN.

Disordered regions lie at residues 47-79 and 97-149; these read PETQ…EDGN and EEDT…GRNG. Positions 99 to 112 are enriched in basic and acidic residues; that stretch reads DTAKRLRSPRDKRN. Residues 129–138 show a composition bias toward acidic residues; it reads QQEEEEEEEE. The Cupin type-1 domain maps to 161–308; it reads ENIAQPARAD…AFGLRQRQVT (148 aa).

This sequence belongs to the 11S seed storage protein (globulins) family. In terms of assembly, hexamer; each subunit is composed of an acidic and a basic chain derived from a single precursor and linked by a disulfide bond.

This protein found in the seeds of many leguminous and non-leguminous plants is the source of sulfur-containing amino acids in seed meals. The polypeptide is Legumin type B (LEB6) (Vicia faba (Broad bean)).